A 91-amino-acid chain; its full sequence is RNA-binding protein Hfq (91 aa).

The region spanning 9-68 (DPFLNALRRERVPVSVYLVNGIKLQGTIESFDQFVVLLRNTVSQMVYKHAISTVVPARNV) is the Sm domain.

This sequence belongs to the Hfq family. Homohexamer.

Functionally, RNA chaperone that binds small regulatory RNA (sRNAs) and mRNAs to facilitate mRNA translational regulation in response to envelope stress, environmental stress and changes in metabolite concentrations. Also binds with high specificity to tRNAs. This chain is RNA-binding protein Hfq, found in Stenotrophomonas maltophilia (strain K279a).